The following is a 66-amino-acid chain: MPKLKTNSSAKKRFKVTSTGKVMVTQSGKRHNMRKRNKRMLLVQKGYTLISKSKMRLMRSVMPYSF.

The protein belongs to the bacterial ribosomal protein bL35 family.

In Neorickettsia sennetsu (strain ATCC VR-367 / Miyayama) (Ehrlichia sennetsu), this protein is Large ribosomal subunit protein bL35.